The primary structure comprises 534 residues: Glycerophosphodiester transporter GIT2 (534 aa).

Helical transmembrane passes span 63–83 (GAGLFADGYVNNSIGIVMACL), 96–116 (AISNIGSIGFVGTVVGQLSFG), 135–155 (LIAFTLLCAVGSWGTTIQGFF), 163–183 (FCLGVAIGAEYPTSSVIASEF), 202–222 (FMIDFGFVVSAFVPFVLLWIF), 230–250 (LWRVSIGLGAILPTALFFIRL), 289–309 (MIWFIYNFSVYSFGTFNAIIL), 322–342 (WGWSVVFNLFYIPGSFLGAFS), 350–370 (LTLAIGVGLQGIIGFIMSACL), 377–397 (VAAFTVVFGIFATLGEFGPGG), 417–437 (GIAAAMGKIGAFVGTWIFPAI), and 453–473 (VPFYLSSGLCIFSALLTFFLC).

The protein belongs to the major facilitator superfamily. Sugar transporter (TC 2.A.1.1) family.

Its subcellular location is the cell membrane. In terms of biological role, probable glycerophosphodiester transporter. Does not possess detectable glycerophosphoinositol (GroPIns) transport activity. Might be involved in the uptake of glycerophosphocholine (GroPCho). The expanded ability to utilize GroPIns and GroPCho results from the organism's pathogenic nature and its need to occupy a variety of environments within its host organism. This possibility is buttressed by the fact that GroPIns and GroPCho are present and abundant in human fluids. The polypeptide is Glycerophosphodiester transporter GIT2 (Candida albicans (strain SC5314 / ATCC MYA-2876) (Yeast)).